The chain runs to 151 residues: MTKTIYVLNGPNLNLLGTREPDIYGHHTLADVEALCRETAARFGLEAVCHQTNREGEIVDLIHEAAKKQAAGLIINGGGYSHTSVAIHDAIVGVQIPTVEVHVSNVYARERFRHQSFIAKAAFATLCGFGIEGYRLAILGLAARIGLAAKT.

Catalysis depends on tyrosine 24, which acts as the Proton acceptor. Residues asparagine 76, histidine 82, and aspartate 89 each contribute to the substrate site. The active-site Proton donor is histidine 102. Residues 103–104 (VS) and arginine 113 each bind substrate.

This sequence belongs to the type-II 3-dehydroquinase family. In terms of assembly, homododecamer.

The enzyme catalyses 3-dehydroquinate = 3-dehydroshikimate + H2O. It participates in metabolic intermediate biosynthesis; chorismate biosynthesis; chorismate from D-erythrose 4-phosphate and phosphoenolpyruvate: step 3/7. Catalyzes a trans-dehydration via an enolate intermediate. The polypeptide is 3-dehydroquinate dehydratase (Afipia carboxidovorans (strain ATCC 49405 / DSM 1227 / KCTC 32145 / OM5) (Oligotropha carboxidovorans)).